A 211-amino-acid polypeptide reads, in one-letter code: Bcl-2 homologous antagonist/killer (211 aa).

Residues 1-28 (MASGQGPGPPRQECGEPALPSASEEQVA) form a disordered region. At Ala2 the chain carries N-acetylalanine. The BH3 signature appears at 74–88 (VGRQLAIIGDDINRR). The BH1 motif lies at 117–136 (SLFESGINWGRVVALLGFGY). Residues Asp160 and His164 each contribute to the Zn(2+) site. The BH2 signature appears at 169–184 (RWIAQRGGWVAALNLG). Residues 188 to 205 (ILNVLVVLGVVLLGQFVV) traverse the membrane as a helical segment.

Belongs to the Bcl-2 family. In terms of assembly, homodimer. Formation of the homodimer is zinc-dependent. Forms heterodimers with BCL2 and BCL2L1 isoform Bcl-X(L). Forms heterooligomers with BAX. Interacts with BCL2A1. Interacts with RTL10/BOP. Interacts with VDAC1. Interacts with GIMAP3/IAN4 and GIMAP5/IAN5. (Microbial infection) Interacts with vaccinia virus protein F1. As to quaternary structure, (Microbial infection) Interacts with myxoma virus protein M11L. In terms of assembly, (Microbial infection) Interacts with Epstein-Barr virus protein BALF1. (Microbial infection) Interacts with adenovirus protein E1B 19K. In terms of tissue distribution, expressed in a wide variety of tissues, with highest levels in the heart and skeletal muscle.

Its subcellular location is the mitochondrion outer membrane. In terms of biological role, plays a role in the mitochondrial apoptotic process. Upon arrival of cell death signals, promotes mitochondrial outer membrane (MOM) permeabilization by oligomerizing to form pores within the MOM. This releases apoptogenic factors into the cytosol, including cytochrome c, promoting the activation of caspase 9 which in turn processes and activates the effector caspases. The chain is Bcl-2 homologous antagonist/killer (BAK1) from Homo sapiens (Human).